Reading from the N-terminus, the 117-residue chain is Large ribosomal subunit protein uL23 (117 aa).

It belongs to the universal ribosomal protein uL23 family. In terms of assembly, part of the 50S ribosomal subunit. Contacts protein L29, and trigger factor when it is bound to the ribosome.

One of the early assembly proteins it binds 23S rRNA. One of the proteins that surrounds the polypeptide exit tunnel on the outside of the ribosome. Forms the main docking site for trigger factor binding to the ribosome. The polypeptide is Large ribosomal subunit protein uL23 (Ruminiclostridium cellulolyticum (strain ATCC 35319 / DSM 5812 / JCM 6584 / H10) (Clostridium cellulolyticum)).